The chain runs to 502 residues: Zinc finger C3HC-type protein 1 (502 aa).

The residue at position 2 (A2) is an N-acetylalanine. Residue S24 is modified to Phosphoserine. Position 28 is a phosphothreonine (T28). A disordered region spans residues 36 to 73; it reads IDEGIAPEEGGVDAKDTSATSQSVNGSPQAEQPSLEST. A compositionally biased stretch (polar residues) spans 52–72; that stretch reads TSATSQSVNGSPQAEQPSLES. S58 and S62 each carry phosphoserine. T84 carries the phosphothreonine modification. The segment at 102–156 adopts a C3HC-type zinc-finger fold; the sequence is CAKYGWVTVECDMLKCSSCQAFLCASLQPAFDFDRYKQRCAELKKALCTAHEKFC. An F-box-like region spans residues 170–210; it reads LPLDEPAILVSEFLDRFQSLCHLDLQLPSLRPEDLKTMCLT. Positions 302–423 are disordered; the sequence is SSPIPGLEGR…SSRSFFDPTS (122 aa). S321 and S329 each carry phosphoserine. Over residues 327–338 the composition is skewed to polar residues; the sequence is TRSQDATFSPGS. Position 333 is a phosphothreonine (T333). Residues S335, S338, S344, S354, S359, and S370 each carry the phosphoserine modification. Positions 351–360 are enriched in polar residues; sequence RTRSWDSSSP. Positions 371–380 are enriched in low complexity; it reads PTTRTRPVTR. Residue S381 is modified to Phosphoserine. T384 and T387 each carry phosphothreonine. At S395 the chain carries Phosphoserine. The Nuclear localization signal motif lies at 396–402; that stretch reads PLRKAKR. A phosphoserine mark is found at S407 and S483. Low complexity predominate over residues 407–422; the sequence is SSSSSDTSSRSFFDPT.

In terms of assembly, interacts with TPR; this interaction mediates ZC3HC1 nuclear envelopes (NE)-association but also required for proper positioning of a substantial amount of TPR at the nuclear basket (NB). In terms of processing, phosphorylated. May also be weakly phosphorylated on Tyr residues. Widely expressed. Highly expressed in heart, skeletal muscle and testis. Expressed in brain, placenta, lung, kidney, liver, pancreas, spleen, thymus, prostate, ovary small intestine and colon. Weakly or not expressed in leukocytes.

It localises to the nucleus. Its subcellular location is the nucleus envelope. Required for proper positioning of a substantial amount of TPR at the nuclear basket (NB) through interaction with TPR. The protein is Zinc finger C3HC-type protein 1 of Homo sapiens (Human).